The primary structure comprises 283 residues: Aldo-keto reductase Mmcs_1938 (283 aa).

The Proton donor role is filled by Tyr58. Gly196, Leu198, Val200, Ile236, Arg238, Ser239, Ala240, Arg244, Ser247, Asn248, and Arg274 together coordinate NADPH.

Belongs to the aldo/keto reductase family.

In Mycobacterium sp. (strain MCS), this protein is Aldo-keto reductase Mmcs_1938.